The primary structure comprises 330 residues: NADH-quinone oxidoreductase subunit H (330 aa).

Helical transmembrane passes span 11-31, 81-101, 114-134, 154-174, 187-207, 238-258, 270-290, and 309-329; these read ILVA…CGAL, FIFV…FAII, IGIL…LFAG, ISYE…VGSF, LWFI…GVAV, FFVG…TLFF, QIPF…FILL, and FCLP…LAAA.

The protein belongs to the complex I subunit 1 family. NDH-1 is composed of 13 different subunits. Subunits NuoA, H, J, K, L, M, N constitute the membrane sector of the complex.

The protein resides in the cell inner membrane. The catalysed reaction is a quinone + NADH + 5 H(+)(in) = a quinol + NAD(+) + 4 H(+)(out). Functionally, NDH-1 shuttles electrons from NADH, via FMN and iron-sulfur (Fe-S) centers, to quinones in the respiratory chain. The immediate electron acceptor for the enzyme in this species is believed to be ubiquinone. Couples the redox reaction to proton translocation (for every two electrons transferred, four hydrogen ions are translocated across the cytoplasmic membrane), and thus conserves the redox energy in a proton gradient. This subunit may bind ubiquinone. In Ectopseudomonas mendocina (strain ymp) (Pseudomonas mendocina), this protein is NADH-quinone oxidoreductase subunit H.